Here is a 689-residue protein sequence, read N- to C-terminus: Glycine--tRNA ligase beta subunit (689 aa).

It belongs to the class-II aminoacyl-tRNA synthetase family. As to quaternary structure, tetramer of two alpha and two beta subunits.

Its subcellular location is the cytoplasm. It carries out the reaction tRNA(Gly) + glycine + ATP = glycyl-tRNA(Gly) + AMP + diphosphate. The sequence is that of Glycine--tRNA ligase beta subunit from Pseudoalteromonas translucida (strain TAC 125).